The sequence spans 260 residues: HTH-type transcriptional repressor NanR (260 aa).

The HTH gntR-type domain maps to 27-95; that stretch reads KKLSEMVEEE…NGERARVSRP (69 aa). The segment at residues 55–74 is a DNA-binding region (H-T-H motif); the sequence is ERELMAFFNVGRPSVREALA.

Belongs to the NanR family.

In terms of biological role, transcriptional repressor that controls expression of the genes required for the catabolism of sialic acids. This Citrobacter rodentium (strain ICC168) (Citrobacter freundii biotype 4280) protein is HTH-type transcriptional repressor NanR.